We begin with the raw amino-acid sequence, 86 residues long: DNA-directed RNA polymerase subunit Rpo11 (86 aa).

The protein belongs to the archaeal Rpo11/eukaryotic RPB11/RPC19 RNA polymerase subunit family. As to quaternary structure, part of the RNA polymerase complex.

It is found in the cytoplasm. The enzyme catalyses RNA(n) + a ribonucleoside 5'-triphosphate = RNA(n+1) + diphosphate. DNA-dependent RNA polymerase (RNAP) catalyzes the transcription of DNA into RNA using the four ribonucleoside triphosphates as substrates. The chain is DNA-directed RNA polymerase subunit Rpo11 from Archaeoglobus fulgidus (strain ATCC 49558 / DSM 4304 / JCM 9628 / NBRC 100126 / VC-16).